The following is a 447-amino-acid chain: Cobyrinate a,c-diamide synthase (447 aa).

The 189-residue stretch at 247-435 (RIGVAIDEAF…IHIHAASCPQ (189 aa)) folds into the GATase cobBQ-type domain. Cys329 (nucleophile) is an active-site residue.

Belongs to the CobB/CbiA family. The cofactor is Mg(2+).

It catalyses the reaction cob(II)yrinate + 2 L-glutamine + 2 ATP + 2 H2O = cob(II)yrinate a,c diamide + 2 L-glutamate + 2 ADP + 2 phosphate + 2 H(+). The enzyme catalyses Ni-sirohydrochlorin + 2 L-glutamine + 2 ATP + 2 H2O = Ni-sirohydrochlorin a,c-diamide + 2 L-glutamate + 2 ADP + 2 phosphate + 2 H(+). Its pathway is cofactor biosynthesis; adenosylcobalamin biosynthesis; cob(II)yrinate a,c-diamide from sirohydrochlorin (anaerobic route): step 10/10. Catalyzes the ATP-dependent amidation of the two carboxylate groups at positions a and c of cobyrinate, using either L-glutamine or ammonia as the nitrogen source. Involved in the biosynthesis of the unique nickel-containing tetrapyrrole coenzyme F430, the prosthetic group of methyl-coenzyme M reductase (MCR), which plays a key role in methanogenesis and anaerobic methane oxidation. Catalyzes the ATP-dependent amidation of the two carboxylate groups at positions a and c of Ni-sirohydrochlorin, using L-glutamine or ammonia as the nitrogen source. The polypeptide is Cobyrinate a,c-diamide synthase (Methanothermobacter thermautotrophicus (strain ATCC 29096 / DSM 1053 / JCM 10044 / NBRC 100330 / Delta H) (Methanobacterium thermoautotrophicum)).